The primary structure comprises 64 residues: Endodeoxyribonuclease toxin RalR (64 aa).

It depends on Ca(2+) as a cofactor. The cofactor is Mg(2+).

With respect to regulation, inhibited by EDTA. Its function is as follows. Toxic component of a type I toxin-antitoxin (TA) system. Upon overexpression inhibits growth and reduces colony-forming units in both the presence and absence of the Rac prophage, cells become filamentous. Has deoxyribonuclease activity (probably endonucleolytic), does not digest RNA. Its toxic effects are neutralized by sRNA antitoxin RalA, which is encoded in trans on the opposite DNA strand. Has RAL-like activity. The polypeptide is Endodeoxyribonuclease toxin RalR (ralR) (Escherichia coli (strain K12)).